Here is a 264-residue protein sequence, read N- to C-terminus: E3 ubiquitin-protein ligase MARCHF8 (264 aa).

The tract at residues 15–47 (LGHSVSRSSNISKAGSPTSVSAPSRFPRTSVTP) is disordered. A compositionally biased stretch (polar residues) spans 16 to 47 (GHSVSRSSNISKAGSPTSVSAPSRFPRTSVTP). The RING-CH-type zinc-finger motif lies at 45–106 (VTPSSQDICR…ELCKFEFIME (62 aa)). Positions 53, 56, 70, 72, 80, 83, 96, and 99 each coordinate Zn(2+). A run of 2 helical transmembrane segments spans residues 130–150 (CSVTFHVIAITCVVWSLYVLI) and 170–190 (FWTKLVVVAIGFTGGLLFMYV).

The protein localises to the cytoplasmic vesicle membrane. It is found in the lysosome membrane. Its subcellular location is the early endosome membrane. The catalysed reaction is S-ubiquitinyl-[E2 ubiquitin-conjugating enzyme]-L-cysteine + [acceptor protein]-L-lysine = [E2 ubiquitin-conjugating enzyme]-L-cysteine + N(6)-ubiquitinyl-[acceptor protein]-L-lysine.. It participates in protein modification; protein ubiquitination. In terms of biological role, E3 ubiquitin-protein ligase that mediates ubiquitination of cd86 and MHC class II proteins, such as hla-dr alpha and beta, and promotes their subsequent endocytosis and sorting to lysosomes via multivesicular bodies. This chain is E3 ubiquitin-protein ligase MARCHF8 (marchf8), found in Xenopus laevis (African clawed frog).